A 201-amino-acid polypeptide reads, in one-letter code: 3-isopropylmalate dehydratase small subunit (201 aa).

The protein belongs to the LeuD family. LeuD type 1 subfamily. Heterodimer of LeuC and LeuD.

The enzyme catalyses (2R,3S)-3-isopropylmalate = (2S)-2-isopropylmalate. Its pathway is amino-acid biosynthesis; L-leucine biosynthesis; L-leucine from 3-methyl-2-oxobutanoate: step 2/4. Functionally, catalyzes the isomerization between 2-isopropylmalate and 3-isopropylmalate, via the formation of 2-isopropylmaleate. The chain is 3-isopropylmalate dehydratase small subunit from Kineococcus radiotolerans (strain ATCC BAA-149 / DSM 14245 / SRS30216).